The following is a 101-amino-acid chain: Large ribosomal subunit protein uL23 (101 aa).

It belongs to the universal ribosomal protein uL23 family. As to quaternary structure, part of the 50S ribosomal subunit. Contacts protein L29, and trigger factor when it is bound to the ribosome.

One of the early assembly proteins it binds 23S rRNA. One of the proteins that surrounds the polypeptide exit tunnel on the outside of the ribosome. Forms the main docking site for trigger factor binding to the ribosome. The polypeptide is Large ribosomal subunit protein uL23 (Corynebacterium jeikeium (strain K411)).